The primary structure comprises 159 residues: Pathogenesis-related leaf protein 4 (159 aa).

Residues 1 to 24 form the signal peptide; sequence MGLFNISLLLTCLMVLAIFHSCEA. Position 25 is a pyrrolidone carboxylic acid (Gln-25). An SCP domain is found at 32 to 147; that stretch reads LAVHNDARAQ…NGWWFISCNY (116 aa). Intrachain disulfides connect Cys-68–Cys-136, Cys-109–Cys-115, and Cys-131–Cys-145.

This sequence belongs to the CRISP family.

Its function is as follows. Probably involved in the defense reaction of plants against pathogens. This Solanum lycopersicum (Tomato) protein is Pathogenesis-related leaf protein 4.